Consider the following 472-residue polypeptide: Ribosomal protein uS12 methylthiotransferase RimO (472 aa).

The MTTase N-terminal domain maps to 33-143; the sequence is NRIGFVSLGC…VLKHVHKYVP (111 aa). Residues cysteine 42, cysteine 78, cysteine 107, cysteine 175, cysteine 179, and cysteine 182 each coordinate [4Fe-4S] cluster. Positions 161-398 constitute a Radical SAM core domain; the sequence is LTPKHYAYLK…MELQAEISAE (238 aa). Positions 401–467 constitute a TRAM domain; it reads ARFVGRTLDI…EHDLWAEVVD (67 aa).

Belongs to the methylthiotransferase family. RimO subfamily. [4Fe-4S] cluster is required as a cofactor.

Its subcellular location is the cytoplasm. The enzyme catalyses L-aspartate(89)-[ribosomal protein uS12]-hydrogen + (sulfur carrier)-SH + AH2 + 2 S-adenosyl-L-methionine = 3-methylsulfanyl-L-aspartate(89)-[ribosomal protein uS12]-hydrogen + (sulfur carrier)-H + 5'-deoxyadenosine + L-methionine + A + S-adenosyl-L-homocysteine + 2 H(+). Catalyzes the methylthiolation of an aspartic acid residue of ribosomal protein uS12. The sequence is that of Ribosomal protein uS12 methylthiotransferase RimO from Shewanella sp. (strain W3-18-1).